The chain runs to 886 residues: DNA gyrase subunit A (886 aa).

The Topo IIA-type catalytic domain occupies 35-501 (LPDVRDGLKP…GFEDLEDEDL (467 aa)). Catalysis depends on Y123, which acts as the O-(5'-phospho-DNA)-tyrosine intermediate. The short motif at 528–534 (QNRGGRG) is the GyrA-box element. A disordered region spans residues 810 to 860 (VKEDADEENEDEQSTVSEDGTEQQREAVVNDETPGNAIHTEVIDSEVNDED). Over residues 813-822 (DADEENEDEQ) the composition is skewed to acidic residues.

This sequence belongs to the type II topoisomerase GyrA/ParC subunit family. As to quaternary structure, heterotetramer, composed of two GyrA and two GyrB chains. In the heterotetramer, GyrA contains the active site tyrosine that forms a transient covalent intermediate with DNA, while GyrB binds cofactors and catalyzes ATP hydrolysis.

It localises to the cytoplasm. It catalyses the reaction ATP-dependent breakage, passage and rejoining of double-stranded DNA.. In terms of biological role, a type II topoisomerase that negatively supercoils closed circular double-stranded (ds) DNA in an ATP-dependent manner to modulate DNA topology and maintain chromosomes in an underwound state. Negative supercoiling favors strand separation, and DNA replication, transcription, recombination and repair, all of which involve strand separation. Also able to catalyze the interconversion of other topological isomers of dsDNA rings, including catenanes and knotted rings. Type II topoisomerases break and join 2 DNA strands simultaneously in an ATP-dependent manner. In Staphylococcus aureus (strain MRSA252), this protein is DNA gyrase subunit A.